We begin with the raw amino-acid sequence, 175 residues long: Large ribosomal subunit protein uL10 (175 aa).

Belongs to the universal ribosomal protein uL10 family. Part of the ribosomal stalk of the 50S ribosomal subunit. The N-terminus interacts with L11 and the large rRNA to form the base of the stalk. The C-terminus forms an elongated spine to which L12 dimers bind in a sequential fashion forming a multimeric L10(L12)X complex.

Functionally, forms part of the ribosomal stalk, playing a central role in the interaction of the ribosome with GTP-bound translation factors. The sequence is that of Large ribosomal subunit protein uL10 from Alkalilimnicola ehrlichii (strain ATCC BAA-1101 / DSM 17681 / MLHE-1).